The sequence spans 293 residues: Transcriptional regulator ICP22 homolog (293 aa).

Disordered regions lie at residues 1–49 (MPHG…QRID) and 175–293 (RFLE…SARR). Residues 21–31 (TPSTSPLIPSL) are compositionally biased toward low complexity. Residues 190 to 210 (EECDVSGDESPSEEEEEDEAS) are compositionally biased toward acidic residues. Residues 272-281 (AAKKRRKRQP) show a composition bias toward basic residues. The segment covering 282 to 293 (PKGERPTKSARR) has biased composition (basic and acidic residues).

This sequence belongs to the herpesviridae ICP22 family.

The polypeptide is Transcriptional regulator ICP22 homolog (IR4) (Equus caballus (Horse)).